The sequence spans 460 residues: uncharacterized protein (460 aa).

In terms of domain architecture, TRAM spans 8-66 (PVEKNEFIDVVFEDLTHDGAGVAKVKGYPIFVKNGLPGEEAQIKIIKVKKNFAFGRLMK). Positions 79, 85, 88, and 166 each coordinate [4Fe-4S] cluster. S-adenosyl-L-methionine is bound by residues Gln-290, Tyr-319, Glu-340, and Asp-388. The active-site Nucleophile is the Cys-415.

Belongs to the class I-like SAM-binding methyltransferase superfamily. RNA M5U methyltransferase family.

This is an uncharacterized protein from Bacillus cereus (strain ATCC 10987 / NRS 248).